We begin with the raw amino-acid sequence, 359 residues long: Tyrosine-protein phosphatase non-receptor type 7 (359 aa).

The tract at residues 1–33 (MVQACEGRSRAQLPTLSLGADMTQPPPTKAPAK) is disordered. The tract at residues 38–51 (LQERRGSSVALMLD) is interaction with MAP kinases. Ser-44 carries the phosphoserine modification. Phosphothreonine is present on Thr-66. Phosphoserine occurs at positions 93 and 143. The Tyrosine-protein phosphatase domain maps to 97–349 (LEEEFLKIPS…QFLHHTLALY (253 aa)). Residues Asp-257, 290–296 (CSAGIGR), and Gln-334 each bind substrate. Cys-290 functions as the Phosphocysteine intermediate in the catalytic mechanism. Cysteine sulfenic acid (-SOH) is present on Cys-290.

Belongs to the protein-tyrosine phosphatase family. Non-receptor class subfamily. Post-translationally, oxidized at active site cysteine. Treatment with pervanadate (vanadate and H(2)O(2)) or with antigen enhanced oxidation of active site cysteine. As to expression, expressed in bone marrow-derived mast cells.

The protein localises to the cytoplasm. It is found in the cytoskeleton. The catalysed reaction is O-phospho-L-tyrosyl-[protein] + H2O = L-tyrosyl-[protein] + phosphate. Inhibited upon FCER1A triggering. Its function is as follows. May play a role in the regulation of T and B-lymphocyte development and signal transduction. The sequence is that of Tyrosine-protein phosphatase non-receptor type 7 (Ptpn7) from Mus musculus (Mouse).